Here is a 150-residue protein sequence, read N- to C-terminus: Large ribosomal subunit protein bL9 (150 aa).

This sequence belongs to the bacterial ribosomal protein bL9 family.

In terms of biological role, binds to the 23S rRNA. This chain is Large ribosomal subunit protein bL9, found in Photorhabdus laumondii subsp. laumondii (strain DSM 15139 / CIP 105565 / TT01) (Photorhabdus luminescens subsp. laumondii).